The primary structure comprises 726 residues: Catalase-peroxidase (726 aa).

A disordered region spans residues 1-33; the sequence is MSTSDDIHNTTATGKCPFHQGGHDQSAGAGTTT. Positions 105-226 form a cross-link, tryptophyl-tyrosyl-methioninium (Trp-Tyr) (with M-252); the sequence is WHGAGTYRSI…LGATEMGLIY (122 aa). Residue His106 is the Proton acceptor of the active site. Positions 226–252 form a cross-link, tryptophyl-tyrosyl-methioninium (Tyr-Met) (with W-105); the sequence is YVNPEGPDHSGEPLSAAAAIRATFGNM. His267 provides a ligand contact to heme b.

Belongs to the peroxidase family. Peroxidase/catalase subfamily. Homodimer or homotetramer. Requires heme b as cofactor. In terms of processing, formation of the three residue Trp-Tyr-Met cross-link is important for the catalase, but not the peroxidase activity of the enzyme.

It carries out the reaction H2O2 + AH2 = A + 2 H2O. The catalysed reaction is 2 H2O2 = O2 + 2 H2O. Functionally, bifunctional enzyme with both catalase and broad-spectrum peroxidase activity. The sequence is that of Catalase-peroxidase from Shigella boydii serotype 18 (strain CDC 3083-94 / BS512).